The chain runs to 21 residues: Tricyclic peptide MS-271 (21 aa).

The segment at residues 1–9 (CLGVGSCND) is a cross-link (3-cysteinyl-aspartic acid (Cys-Asp)). 2 cysteine pairs are disulfide-bonded: C1/C13 and C7/C19. Position 21 is a D-tryptophan (W21).

Functionally, inhibits chicken myosin light chain kinase with an IC(50) of 8 M. Does not inhibit bovine cAMP-dependent protein kinase or rat protein kinase C. Antibacterial activity against the Gram-positive bacteria B.subtilis, E.faecium and S.aureus. No antibacterial activity against the Gram-negative bacteria E.coli, K.pneumoniae, P.aeruginosa, P.vulgaris, S.sonnei and S.typhosa. No antifungal activity against C.albicans. In Streptomyces sp, this protein is Tricyclic peptide MS-271.